A 227-amino-acid polypeptide reads, in one-letter code: Cytochrome c oxidase subunit 2 (227 aa).

The Mitochondrial intermembrane segment spans residues 1–14 (MPYPMQLGFQDATS). Residues 15–45 (PIMEELTYFHDHTLMIVFLISSLVLYIIILM) traverse the membrane as a helical segment. The Mitochondrial matrix segment spans residues 46–59 (LTTKLTHTSTMDAQ). Residues 60–87 (EVETIWTILPAVILVLIALPSLRILYMM) form a helical membrane-spanning segment. Over 88-227 (DEIYNPYLTI…YFEKWSSMMQ (140 aa)) the chain is Mitochondrial intermembrane. Cu cation is bound by residues His161, Cys196, Glu198, Cys200, His204, and Met207. Glu198 is a Mg(2+) binding site. Tyr218 bears the Phosphotyrosine mark.

The protein belongs to the cytochrome c oxidase subunit 2 family. Component of the cytochrome c oxidase (complex IV, CIV), a multisubunit enzyme composed of 14 subunits. The complex is composed of a catalytic core of 3 subunits MT-CO1, MT-CO2 and MT-CO3, encoded in the mitochondrial DNA, and 11 supernumerary subunits COX4I, COX5A, COX5B, COX6A, COX6B, COX6C, COX7A, COX7B, COX7C, COX8 and NDUFA4, which are encoded in the nuclear genome. The complex exists as a monomer or a dimer and forms supercomplexes (SCs) in the inner mitochondrial membrane with NADH-ubiquinone oxidoreductase (complex I, CI) and ubiquinol-cytochrome c oxidoreductase (cytochrome b-c1 complex, complex III, CIII), resulting in different assemblies (supercomplex SCI(1)III(2)IV(1) and megacomplex MCI(2)III(2)IV(2)). Found in a complex with TMEM177, COA6, COX18, COX20, SCO1 and SCO2. Interacts with TMEM177 in a COX20-dependent manner. Interacts with COX20. Interacts with COX16. Requires Cu cation as cofactor.

It localises to the mitochondrion inner membrane. It catalyses the reaction 4 Fe(II)-[cytochrome c] + O2 + 8 H(+)(in) = 4 Fe(III)-[cytochrome c] + 2 H2O + 4 H(+)(out). Its function is as follows. Component of the cytochrome c oxidase, the last enzyme in the mitochondrial electron transport chain which drives oxidative phosphorylation. The respiratory chain contains 3 multisubunit complexes succinate dehydrogenase (complex II, CII), ubiquinol-cytochrome c oxidoreductase (cytochrome b-c1 complex, complex III, CIII) and cytochrome c oxidase (complex IV, CIV), that cooperate to transfer electrons derived from NADH and succinate to molecular oxygen, creating an electrochemical gradient over the inner membrane that drives transmembrane transport and the ATP synthase. Cytochrome c oxidase is the component of the respiratory chain that catalyzes the reduction of oxygen to water. Electrons originating from reduced cytochrome c in the intermembrane space (IMS) are transferred via the dinuclear copper A center (CU(A)) of subunit 2 and heme A of subunit 1 to the active site in subunit 1, a binuclear center (BNC) formed by heme A3 and copper B (CU(B)). The BNC reduces molecular oxygen to 2 water molecules using 4 electrons from cytochrome c in the IMS and 4 protons from the mitochondrial matrix. The polypeptide is Cytochrome c oxidase subunit 2 (MT-CO2) (Osphranter robustus (Wallaroo)).